Reading from the N-terminus, the 824-residue chain is RelA-associated inhibitor (824 aa).

Met1 carries the post-translational modification N-acetylmethionine. Disordered stretches follow at residues 48–87 and 99–271; these read SLWS…SPQK and RSES…YERL. Residues Ser84, Ser100, Ser102, Ser110, Ser113, Ser119, and Ser120 each carry the phosphoserine modification. The residue at position 123 (Thr123) is a Phosphothreonine. At Ser134 the chain carries Phosphoserine. Omega-N-methylarginine is present on residues Arg137, Arg142, Arg144, Arg160, Arg167, and Arg180. Ser183, Ser187, and Ser203 each carry phosphoserine. At Arg205 the chain carries Omega-N-methylarginine. Thr275 carries the phosphothreonine modification. Ser279 is modified (phosphoserine). Disordered regions lie at residues 291-370 and 388-501; these read SLDG…RPIP and RAVL…QTVP. Position 307 is a phosphothreonine (Thr307). Phosphoserine is present on residues Ser315, Ser331, and Ser338. Thr340 carries the phosphothreonine modification. Low complexity predominate over residues 359–370; sequence QPRSTPRQRPIP. A compositionally biased stretch (pro residues) spans 400–424; the sequence is APPPKLPPQPPPQPQMQPQPQPQPQ. Over residues 425-440 the composition is skewed to low complexity; the sequence is MQPQSQAQPQTPAPQQ. Phosphoserine occurs at positions 522, 563, and 593. The disordered stretch occupies residues 547 to 614; it reads FHRHGGPGPG…SVLRKVGSPR (68 aa). A compositionally biased stretch (pro residues) spans 575 to 597; sequence PPAPAPPAPIPPPAPPQSSPPEQ. ANK repeat units follow at residues 655 to 684 and 688 to 717; these read EGIT…NVNS and HGWT…AIFA. The region spanning 754 to 816 is the SH3 domain; it reads MHNGVVYALW…PRNYFGLFPR (63 aa).

Belongs to the iASPP family. In terms of assembly, interacts with TP63 and TP73. Interacts with RELA NF-kappa-B subunit and with SP1 via its C-terminal part. Interacts (via SH3 domain and ANK repeats) with p53/TP53; the interaction inhibits pro-apoptotic activity of p53/TP53. As to expression, most abundant in skin with high levels also found in heart, testis and stomach. In 15.5 dpc embryonic heart, expressed at higher levels in atria than ventricles.

It is found in the cytoplasm. The protein localises to the nucleus. Regulator that plays a central role in regulation of apoptosis and transcription via its interaction with NF-kappa-B and p53/TP53 proteins. Inhibits p53/TP53 function, possibly by preventing the association between p53/TP53 and ASPP1 or ASPP2, and therefore suppressing the subsequent activation of apoptosis. Is involved in NF-kappa-B dependent negative regulation of inflammatory response. The chain is RelA-associated inhibitor from Mus musculus (Mouse).